Consider the following 227-residue polypeptide: GTP:AMP phosphotransferase AK3, mitochondrial (227 aa).

Positions 17, 19, 20, 21, and 22 each coordinate GTP. N6-succinyllysine is present on lysine 20. Position 29 is an N6-acetyllysine; alternate (lysine 29). Lysine 29 is subject to N6-succinyllysine; alternate. Position 34 is an N6-acetyllysine (lysine 34). Residue serine 37 is modified to Phosphoserine. Residues 37-66 form an NMP region; it reads SSGDLLRQNMLQGTEIAVLAKSFIDQGKLI. Positions 38 and 43 each coordinate AMP. Lysine 57 is modified (N6-succinyllysine). An N6-acetyllysine; alternate mark is found at lysine 64 and lysine 80. N6-succinyllysine; alternate occurs at positions 64 and 80. Lysine 64 is a binding site for AMP. Residues glycine 91, arginine 94, and glutamine 98 each contribute to the AMP site. The segment at 127 to 164 is LID; it reads ARWIHPASGRVYNIEFNPPKTVGIDDLTGEPLIQREDD. GTP-binding residues include arginine 128, tyrosine 138, asparagine 139, arginine 161, and arginine 172. 2 positions are modified to N6-acetyllysine; alternate: lysine 174 and lysine 189. Lysine 174 and lysine 189 each carry N6-succinyllysine; alternate. Position 201 (threonine 201) interacts with GTP. An N6-acetyllysine modification is found at lysine 203.

The protein belongs to the adenylate kinase family. AK3 subfamily. Monomer.

It is found in the mitochondrion matrix. The enzyme catalyses a ribonucleoside 5'-triphosphate + AMP = a ribonucleoside 5'-diphosphate + ADP. It catalyses the reaction GTP + AMP = GDP + ADP. It carries out the reaction ITP + AMP = IDP + ADP. Its function is as follows. Mitochondrial adenylate kinase with a specific GTP:AMP phosphotransferase activity. Could also use ITP as phosphate donor. Its physiological function is to recycle GTP into GDP which is necessary for the TCA cycle in the mitochondrial matrix. This Rattus norvegicus (Rat) protein is GTP:AMP phosphotransferase AK3, mitochondrial.